The sequence spans 620 residues: Lamin-B2 (620 aa).

The disordered stretch occupies residues 1-38 (MSPPSPGRRREQRRPRAAATMATPLPGRAGGPATPLSP). The segment at 1–48 (MSPPSPGRRREQRRPRAAATMATPLPGRAGGPATPLSPTRLSRLQEKE) is head. Thr23 and Thr34 each carry phosphothreonine. Ser37 carries the post-translational modification Phosphoserine. Residues 46–402 (EKEELRELND…KLLEGEEERL (357 aa)) form the IF rod domain. A coil 1A region spans residues 49-83 (ELRELNDRLAHYIDRVRALELENDRLLLKISEKEE). Lys77 participates in a covalent cross-link: Glycyl lysine isopeptide (Lys-Gly) (interchain with G-Cter in SUMO2). The residue at position 81 (Lys81) is an N6-acetyllysine; alternate. Lys81 is covalently cross-linked (Glycyl lysine isopeptide (Lys-Gly) (interchain with G-Cter in SUMO2); alternate). The segment at 84–95 (VTTREVSGIKAL) is linker 1. Residues 96-229 (YESELADARR…DFRKSVFEEE (134 aa)) form a coil 1B region. Residues Lys195 and Lys255 each participate in a glycyl lysine isopeptide (Lys-Gly) (interchain with G-Cter in SUMO2) cross-link. Residues 230–256 (VRETRRRHERRLVEVDSSRQQEYDFKM) form a linker 2 region. The tract at residues 257–400 (AQALEELRSQ…YRKLLEGEEE (144 aa)) is coil 2. Phosphoserine is present on residues Ser316 and Ser407. The segment at 399–464 (EERLKLSPSP…GTGGSGGFHL (66 aa)) is disordered. Residues 401-620 (RLKLSPSPSS…RTTSRGCYVM (220 aa)) form a tail region. Low complexity predominate over residues 404–431 (LSPSPSSRVTVSRATSSSSGSLSATGRL). Residue Thr413 is glycosylated (O-linked (GlcNAc) threonine). A phosphoserine mark is found at Ser420, Ser422, Ser424, and Ser426. At Arg433 the chain carries Omega-N-methylarginine. The short motif at 435–440 (KRKRLE) is the Nuclear localization signal element. The segment covering 444–453 (PLGSGPSVLG) has biased composition (low complexity). Residues 462-579 (FHLAQQASAS…EEVAMRTVKK (118 aa)) enclose the LTD domain. Lys489 is covalently cross-linked (Glycyl lysine isopeptide (Lys-Gly) (interchain with G-Cter in SUMO2)). Position 497 is a phosphoserine (Ser497). Residues 581–620 (SVMRENENGEEEEEEAEFGEEDLFHQQGDPRTTSRGCYVM) form a disordered region. The span at 588-601 (NGEEEEEEAEFGEE) shows a compositional bias: acidic residues. Over residues 609 to 620 (DPRTTSRGCYVM) the composition is skewed to polar residues. A Cysteine methyl ester modification is found at Cys617. Cys617 carries the S-farnesyl cysteine lipid modification. Positions 618–620 (YVM) are cleaved as a propeptide — removed in mature form.

This sequence belongs to the intermediate filament family. Dimer. Lamin dimers then assemble into dimeric head-to-tail polymers. Ultimately, two head-to-tail polymers assemble laterally into a protofilament with a uniformly shaped rod of 3.5 nm in diameter. Interacts with TMEM43. B-type lamins undergo a series of modifications, such as farnesylation and phosphorylation. Increased phosphorylation of the lamins occurs before envelope disintegration and probably plays a role in regulating lamin associations. Post-translationally, phosphorylation plays a key role in lamin organization, subcellular localization and nuclear envelope disintegration. Phosphorylation by CDK1 at Ser-37 and Ser-407 at the onset of mitosis drives lamin disassembly and nuclear envelope breakdown.

Its subcellular location is the nucleus lamina. Its function is as follows. Lamins are intermediate filament proteins that assemble into a filamentous meshwork, and which constitute the major components of the nuclear lamina, a fibrous layer on the nucleoplasmic side of the inner nuclear membrane. Lamins provide a framework for the nuclear envelope, bridging the nuclear envelope and chromatin, thereby playing an important role in nuclear assembly, chromatin organization, nuclear membrane and telomere dynamics. The structural integrity of the lamina is strictly controlled by the cell cycle, as seen by the disintegration and formation of the nuclear envelope in prophase and telophase, respectively. The sequence is that of Lamin-B2 (LMNB2) from Homo sapiens (Human).